A 114-amino-acid chain; its full sequence is MAKTPSKKAAKAPKKAGSKRNKRVETYSSYIYKVLKQVHPDTGISKRGMSIMNSFINDIFERLAGEASRLARYNKRSTLSSREIQTAVRLMLPGELAKHAVSEGTKAVTKFTSN.

Residues 1–22 (MAKTPSKKAAKAPKKAGSKRNK) form a disordered region. K3 is subject to N6-acetyllysine. K110 is covalently cross-linked (Glycyl lysine isopeptide (Lys-Gly) (interchain with G-Cter in ubiquitin)).

Belongs to the histone H2B family. As to quaternary structure, the nucleosome is a histone octamer containing two molecules each of H2A, H2B, H3 and H4 assembled in one H3-H4 heterotetramer and two H2A-H2B heterodimers. The octamer wraps approximately 147 bp of DNA. In terms of processing, monoubiquitination of Lys-110 gives a specific tag for epigenetic transcriptional activation and is also prerequisite for histone H3 'Lys-4' and 'Lys-79' methylation.

It is found in the nucleus. The protein localises to the chromosome. In terms of biological role, core component of nucleosome. Nucleosomes wrap and compact DNA into chromatin, limiting DNA accessibility to the cellular machineries which require DNA as a template. Histones thereby play a central role in transcription regulation, DNA repair, DNA replication and chromosomal stability. DNA accessibility is regulated via a complex set of post-translational modifications of histones, also called histone code, and nucleosome remodeling. The polypeptide is Histone H2B (Olisthodiscus luteus (Marine phytoflagellate)).